The primary structure comprises 355 residues: Guanine nucleotide-binding protein alpha-12 subunit (355 aa).

A G-alpha domain is found at 28–355; sequence RQINLLLLGS…EQNLKTLMMQ (328 aa). Positions 31 to 44 are G1 motif; sequence NLLLLGSGESGKST. GTP-binding positions include 36-43, 176-182, 201-205, 270-273, and Ala327; these read GSGESGKS, LFCRKAT, DVGGQ, and NKND. Mg(2+)-binding residues include Ser43 and Thr182. Positions 174 to 182 are G2 motif; sequence DILFCRKAT. The segment at 197 to 206 is G3 motif; sequence FRFIDVGGQR. Residues 266 to 273 are G4 motif; the sequence is ILFMNKND. The tract at residues 325–330 is G5 motif; the sequence is TTAVDT.

Belongs to the G-alpha family. G proteins are composed of 3 units; alpha, beta and gamma. The alpha chain contains the guanine nucleotide binding site.

Functionally, guanine nucleotide-binding proteins (G proteins) are involved as modulators or transducers in various transmembrane signaling systems. May play a role in resistance to fungal infection in the epidermis by regulating the up-regulation of several antimicrobial peptides of the NLP and CNC families. Upstream of plc-3, egl-8, tpa-1 and the p38-like pathway, required for the expression of antimicrobial peptide nlp-29 in the epidermis in response to fungal infection or physical injury. The protein is Guanine nucleotide-binding protein alpha-12 subunit (gpa-12) of Caenorhabditis briggsae.